Consider the following 100-residue polypeptide: Small ribosomal subunit protein uS14c (100 aa).

The interval Met1–Ile31 is disordered.

This sequence belongs to the universal ribosomal protein uS14 family. Part of the 30S ribosomal subunit.

It localises to the plastid. The protein localises to the chloroplast. Its function is as follows. Binds 16S rRNA, required for the assembly of 30S particles. This chain is Small ribosomal subunit protein uS14c, found in Atropa belladonna (Belladonna).